A 228-amino-acid chain; its full sequence is UPF0173 metal-dependent hydrolase Dred_1740 (228 aa).

This sequence belongs to the UPF0173 family.

This is UPF0173 metal-dependent hydrolase Dred_1740 from Desulforamulus reducens (strain ATCC BAA-1160 / DSM 100696 / MI-1) (Desulfotomaculum reducens).